The following is a 185-amino-acid chain: Dual-action ribosomal maturation protein DarP (185 aa).

Residues 1–22 are disordered; the sequence is MWKNGAMRGCNKETGEFLGPSR.

It belongs to the DarP family.

It is found in the cytoplasm. Functionally, member of a network of 50S ribosomal subunit biogenesis factors which assembles along the 30S-50S interface, preventing incorrect 23S rRNA structures from forming. Promotes peptidyl transferase center (PTC) maturation. This chain is Dual-action ribosomal maturation protein DarP, found in Xylella fastidiosa (strain 9a5c).